The sequence spans 119 residues: Holo-[acyl-carrier-protein] synthase (119 aa).

2 residues coordinate Mg(2+): D8 and E50.

The protein belongs to the P-Pant transferase superfamily. AcpS family. It depends on Mg(2+) as a cofactor.

The protein localises to the cytoplasm. The catalysed reaction is apo-[ACP] + CoA = holo-[ACP] + adenosine 3',5'-bisphosphate + H(+). In terms of biological role, transfers the 4'-phosphopantetheine moiety from coenzyme A to a Ser of acyl-carrier-protein. The chain is Holo-[acyl-carrier-protein] synthase from Clavibacter sepedonicus (Clavibacter michiganensis subsp. sepedonicus).